The chain runs to 500 residues: MSHHSSWRGHHCAPGDNNCTAGFKESLGSKNYKLLHVPFHGPTHSHHHEPPHPFPTVDVPDHAHYIIGAVILIVGITGVIGNALVIYVFCRSRTLRTAGNMFVVNLAVADFFMSLTQSPVFFAASLHRRWIFGERICELYAFCGALFGICSMMTLTAIAADRCLAITQPLALVGNVSRRKAGAVLAVVWLYSLGWSLPPFFGWSAYVPEGLQTSCSWDYMTFTPSVRAYTILLFIFVFFIPLGIIVSCYVGIFQAIRAMGKEIRELDCGETQKVYERMQNEWKMAKIALLVILLFVISWSPYSVVALTATAGYSHLLTPYMNSVPAVIAKASAIHNPIIYAITHPKYRAAIARYIPVLRTILRVKEKELRSSFSSGSVSSRRPTLSSQCSLGVSIGNAARANGRWGKKRLSSASDSDSCWTESEADGSSVSSLTFGRRVSTEISTDTVILSPGSSNSTASGQKSEKAHKVVSVPVPSITFETDSADESLSDGKALLLGGN.

Residues 1 to 65 (MSHHSSWRGH…TVDVPDHAHY (65 aa)) are Extracellular-facing. A glycan (N-linked (GlcNAc...) asparagine) is linked at asparagine 18. A helical transmembrane segment spans residues 66–86 (IIGAVILIVGITGVIGNALVI). Topologically, residues 87–101 (YVFCRSRTLRTAGNM) are cytoplasmic. The chain crosses the membrane as a helical span at residues 102-122 (FVVNLAVADFFMSLTQSPVFF). Topologically, residues 123–138 (AASLHRRWIFGERICE) are extracellular. The cysteines at positions 137 and 215 are disulfide-linked. A helical transmembrane segment spans residues 139 to 159 (LYAFCGALFGICSMMTLTAIA). Residues 160–182 (ADRCLAITQPLALVGNVSRRKAG) are Cytoplasmic-facing. A helical transmembrane segment spans residues 183-203 (AVLAVVWLYSLGWSLPPFFGW). Residues 204-232 (SAYVPEGLQTSCSWDYMTFTPSVRAYTIL) lie on the Extracellular side of the membrane. Residues 233–253 (LFIFVFFIPLGIIVSCYVGIF) traverse the membrane as a helical segment. The Cytoplasmic portion of the chain corresponds to 254 to 286 (QAIRAMGKEIRELDCGETQKVYERMQNEWKMAK). A helical membrane pass occupies residues 287–307 (IALLVILLFVISWSPYSVVAL). At 308 to 322 (TATAGYSHLLTPYMN) the chain is on the extracellular side. A helical membrane pass occupies residues 323–343 (SVPAVIAKASAIHNPIIYAIT). Lysine 330 bears the N6-(retinylidene)lysine mark. At 344–500 (HPKYRAAIAR…DGKALLLGGN (157 aa)) the chain is on the cytoplasmic side. 3 disordered regions span residues 406–428 (GKKR…ADGS), 448–470 (VILS…AHKV), and 481–500 (ETDS…LGGN). Composition is skewed to polar residues over residues 411 to 428 (SSAS…ADGS) and 448 to 462 (VILS…ASGQ).

The protein belongs to the G-protein coupled receptor 1 family. Opsin subfamily. As to expression, expressed in a subset of retinal horizontal cells as well as in retinal ganglion cells.

It is found in the cell membrane. Photoreceptor implicated in non-image-forming responses to light. This Rutilus rutilus (Roach) protein is Melanopsin (opn4).